The following is a 255-amino-acid chain: Cullin-like protein 3 (255 aa).

This sequence belongs to the cullin family.

The polypeptide is Cullin-like protein 3 (Arabidopsis thaliana (Mouse-ear cress)).